The chain runs to 167 residues: Mediator of RNA polymerase II transcription subunit 10 (167 aa).

A disordered region spans residues 53–88; sequence LSTHTKPQPPSQDEEQKEKQDDTPEGSANDPLLRDI.

The protein belongs to the Mediator complex subunit 10 family. Component of the Mediator complex.

The protein localises to the nucleus. Functionally, component of the Mediator complex, a coactivator involved in the regulated transcription of nearly all RNA polymerase II-dependent genes. Mediator functions as a bridge to convey information from gene-specific regulatory proteins to the basal RNA polymerase II transcription machinery. Mediator is recruited to promoters by direct interactions with regulatory proteins and serves as a scaffold for the assembly of a functional preinitiation complex with RNA polymerase II and the general transcription factors. The polypeptide is Mediator of RNA polymerase II transcription subunit 10 (nut2) (Neosartorya fischeri (strain ATCC 1020 / DSM 3700 / CBS 544.65 / FGSC A1164 / JCM 1740 / NRRL 181 / WB 181) (Aspergillus fischerianus)).